The chain runs to 505 residues: Deoxyguanosinetriphosphate triphosphohydrolase (505 aa).

An HD domain is found at 66-273 (RLTHSMEVQQ…MEAADDISYC (208 aa)).

It belongs to the dGTPase family. Type 1 subfamily. Homotetramer. It depends on Mg(2+) as a cofactor.

The enzyme catalyses dGTP + H2O = 2'-deoxyguanosine + triphosphate + H(+). Functionally, dGTPase preferentially hydrolyzes dGTP over the other canonical NTPs. This Salmonella typhimurium (strain LT2 / SGSC1412 / ATCC 700720) protein is Deoxyguanosinetriphosphate triphosphohydrolase.